Here is a 347-residue protein sequence, read N- to C-terminus: NADH-quinone oxidoreductase subunit H (347 aa).

Transmembrane regions (helical) follow at residues 13–33 (LLIL…VAYI), 82–102 (GVFL…WAVI), 115–135 (VGIL…IMGG), 161–181 (IGFV…SDIV), 198–218 (FLDW…ISAL), 248–268 (FLLF…LATI), 283–303 (FTWV…FFGI), and 321–341 (LGWK…AAFL).

It belongs to the complex I subunit 1 family. NDH-1 is composed of 14 different subunits. Subunits NuoA, H, J, K, L, M, N constitute the membrane sector of the complex.

Its subcellular location is the cell inner membrane. The catalysed reaction is a quinone + NADH + 5 H(+)(in) = a quinol + NAD(+) + 4 H(+)(out). NDH-1 shuttles electrons from NADH, via FMN and iron-sulfur (Fe-S) centers, to quinones in the respiratory chain. The immediate electron acceptor for the enzyme in this species is believed to be ubiquinone. Couples the redox reaction to proton translocation (for every two electrons transferred, four hydrogen ions are translocated across the cytoplasmic membrane), and thus conserves the redox energy in a proton gradient. This subunit may bind ubiquinone. This is NADH-quinone oxidoreductase subunit H from Mesorhizobium japonicum (strain LMG 29417 / CECT 9101 / MAFF 303099) (Mesorhizobium loti (strain MAFF 303099)).